The primary structure comprises 730 residues: Pentatricopeptide repeat-containing protein At5g64320, mitochondrial (730 aa).

A mitochondrion-targeting transit peptide spans 1 to 18 (MVMLARSKLALDVSRRSQ). PPR repeat units follow at residues 110–144 (SFDVYQVLIGKLGANGEFKTIDRLLIQMKDEGIVF), 145–175 (KESLFISIMRDYDKAGFPGQTTRLMLEMRNV), 181–215 (TFKSYNVVLEILVSGNCHKVAANVFYDMLSRKIPP), 216–250 (TLFTFGVVMKAFCAVNEIDSALSLLRDMTKHGCVP), 251–285 (NSVIYQTLIHSLSKCNRVNEALQLLEEMFLMGCVP), 286–320 (DAETFNDVILGLCKFDRINEAAKMVNRMLIRGFAP), 321–351 (DDITYGYLMNGLCKIGRVDAAKDLFYRIPKP), 352–387 (EIVIFNTLIHGFVTHGRLDDAKAVLSDMVTSYGIVP), 388–422 (DVCTYNSLIYGYWKEGLVGLALEVLHDMRNKGCKP), 423–457 (NVYSYTILVDGFCKLGKIDEAYNVLNEMSADGLKP), 458–492 (NTVGFNCLISAFCKEHRIPEAVEIFREMPRKGCKP), 493–527 (DVYTFNSLISGLCEVDEIKHALWLLRDMISEGVVA), 528–562 (NTVTYNTLINAFLRRGEIKEARKLVNEMVFQGSPL), 563–597 (DEITYNSLIKGLCRAGEVDKARSLFEKMLRDGHAP), 598–632 (SNISCNILINGLCRSGMVEEAVEFQKEMVLRGSTP), 633–667 (DIVTFNSLINGLCRAGRIEDGLTMFRKLQAEGIPP), and 668–702 (DTVTFNTLMSWLCKGGFVYDACLLLDEGIEDGFVP).

Belongs to the PPR family. P subfamily.

It localises to the mitochondrion. The chain is Pentatricopeptide repeat-containing protein At5g64320, mitochondrial from Arabidopsis thaliana (Mouse-ear cress).